A 349-amino-acid polypeptide reads, in one-letter code: tRNA pseudouridine synthase D (349 aa).

Phe27 contributes to the substrate binding site. Catalysis depends on Asp80, which acts as the Nucleophile. Asn129 contributes to the substrate binding site. Positions 155-303 constitute a TRUD domain; that stretch reads GVPNYFGAQR…VEAARRAMLL (149 aa). Phe329 contacts substrate.

Belongs to the pseudouridine synthase TruD family.

It carries out the reaction uridine(13) in tRNA = pseudouridine(13) in tRNA. Its function is as follows. Responsible for synthesis of pseudouridine from uracil-13 in transfer RNAs. The polypeptide is tRNA pseudouridine synthase D (Escherichia coli O6:K15:H31 (strain 536 / UPEC)).